A 257-amino-acid chain; its full sequence is Phycoerythrobilin:ferredoxin oxidoreductase (257 aa).

Belongs to the HY2 family.

The catalysed reaction is (3Z)-phycoerythrobilin + oxidized 2[4Fe-4S]-[ferredoxin] = 15,16-dihydrobiliverdin + reduced 2[4Fe-4S]-[ferredoxin] + 2 H(+). In terms of biological role, catalyzes the two-electron reduction of the C2 and C3(1) diene system of 15,16-dihydrobiliverdin. This is Phycoerythrobilin:ferredoxin oxidoreductase (pebB) from Prochlorococcus marinus (strain SARG / CCMP1375 / SS120).